Consider the following 459-residue polypeptide: Sensor histidine kinase SpaK (459 aa).

The Cytoplasmic segment spans residues 1-18 (MGIGFKGRKTLLRELVKY). A helical membrane pass occupies residues 19 to 39 (MVTLCISLVVLALLYIFINTI). Residues 40–155 (AMNTGFSHPA…RKYLPNYELT (116 aa)) lie on the Extracellular side of the membrane. The helical transmembrane segment at 156 to 176 (SICILIILLIIVISIITTYFA) threads the bilayer. Residues 177–459 (NRLRKHFETL…VRVKIPLRNE (283 aa)) lie on the Cytoplasmic side of the membrane. In terms of domain architecture, Histidine kinase spans 244 to 458 (ALAHEIKIPI…EVRVKIPLRN (215 aa)). His247 bears the Phosphohistidine; by autocatalysis mark.

It localises to the cell membrane. The catalysed reaction is ATP + protein L-histidine = ADP + protein N-phospho-L-histidine.. Member of the two-component regulatory system SpaK/SpaR involved in the regulation of the biosynthesis of lantibiotic subtilin. SpaK may function as a membrane-associated protein kinase that phosphorylates SpaR in response to environmental signals. In Bacillus subtilis, this protein is Sensor histidine kinase SpaK (spaK).